A 256-amino-acid polypeptide reads, in one-letter code: Alcohol dehydrogenase (256 aa).

An N-acetylserine modification is found at serine 2. Residues phenylalanine 12–isoleucine 41 and aspartate 65 contribute to the NAD(+) site. Residue serine 140 coordinates substrate. The Proton acceptor role is filled by tyrosine 153. Lysine 157 lines the NAD(+) pocket.

The protein belongs to the short-chain dehydrogenases/reductases (SDR) family. As to quaternary structure, homodimer.

It carries out the reaction a primary alcohol + NAD(+) = an aldehyde + NADH + H(+). The enzyme catalyses a secondary alcohol + NAD(+) = a ketone + NADH + H(+). Inhibited by 2,2,2-trifluoroethanol and pyrazole. This Drosophila melanogaster (Fruit fly) protein is Alcohol dehydrogenase (Adh).